We begin with the raw amino-acid sequence, 408 residues long: Phosphoenolpyruvate/phosphate translocator 1, chloroplastic (408 aa).

The N-terminal 85 residues, 1-85 (MQSSAVFSLS…SLDTNRFRTA (85 aa)), are a transit peptide targeting the chloroplast. N-acetylalanine is present on Ala-86. The next 8 helical transmembrane spans lie at 105-125 (VLEL…FNIY), 137-157 (MTVT…MWVL), 165-185 (ISGA…LGNL), 198-218 (FTHT…AMFL), 222-242 (PTPW…LASI), 283-303 (ITLF…VTFF), 324-346 (IYTK…YMIL), and 377-396 (VSPV…FLYS). Residues 124–241 (IYNKQVLKAL…PIVGGVALAS (118 aa)) form the EamA domain.

It belongs to the TPT transporter family. PPT (TC 2.A.7.9) subfamily. In terms of tissue distribution, expressed in root columella, lateral root cap and root vasculature tissue. In leaves, highly expressed in xylem parenchyma cells. In flowers, expressed in sepals, petals, filaments of the stamens, anthers and stigma.

It localises to the plastid. It is found in the chloroplast membrane. Functionally, phosphoenolpyruvate/phosphate translocator that transports phosphoenolpyruvate (PEP), 2-phosphoglycerate, 3-phosphoglycerate and dihydroxyacetone phosphate. Imports PEP to the chloroplast stroma as one substrate of the shikimate pathway, from which aromatic amino acids and a variety of secondary products derive. Required for correct leaf mesophyll cell development and expression of chlorophyll a/b binding protein 3 (CAB3). The protein is Phosphoenolpyruvate/phosphate translocator 1, chloroplastic (PPT1) of Arabidopsis thaliana (Mouse-ear cress).